A 500-amino-acid polypeptide reads, in one-letter code: Glycerol kinase (500 aa).

T13 contacts ADP. T13, T14, and S15 together coordinate ATP. A sn-glycerol 3-phosphate-binding site is contributed by T13. R17 contributes to the ADP binding site. Sn-glycerol 3-phosphate is bound by residues R83, E84, and Y135. Glycerol is bound by residues R83, E84, and Y135. H231 is subject to Phosphohistidine; by HPr. Sn-glycerol 3-phosphate is bound at residue D245. Positions 245 and 246 each coordinate glycerol. T267 and G310 together coordinate ADP. Residues T267, G310, Q314, and G411 each coordinate ATP. The ADP site is built by G411 and N415.

It belongs to the FGGY kinase family. Homotetramer and homodimer (in equilibrium). In terms of processing, the phosphoenolpyruvate-dependent sugar phosphotransferase system (PTS), including enzyme I, and histidine-containing protein (HPr) are required for the phosphorylation, which leads to the activation of the enzyme.

The enzyme catalyses glycerol + ATP = sn-glycerol 3-phosphate + ADP + H(+). The protein operates within polyol metabolism; glycerol degradation via glycerol kinase pathway; sn-glycerol 3-phosphate from glycerol: step 1/1. With respect to regulation, activated by phosphorylation and inhibited by fructose 1,6-bisphosphate (FBP). Key enzyme in the regulation of glycerol uptake and metabolism. Catalyzes the phosphorylation of glycerol to yield sn-glycerol 3-phosphate. The chain is Glycerol kinase from Oceanobacillus iheyensis (strain DSM 14371 / CIP 107618 / JCM 11309 / KCTC 3954 / HTE831).